A 147-amino-acid polypeptide reads, in one-letter code: Prefoldin subunit alpha 2 (147 aa).

It belongs to the prefoldin subunit alpha family. As to quaternary structure, heterohexamer of two alpha and four beta subunits.

Its subcellular location is the cytoplasm. In terms of biological role, molecular chaperone capable of stabilizing a range of proteins. Seems to fulfill an ATP-independent, HSP70-like function in archaeal de novo protein folding. The polypeptide is Prefoldin subunit alpha 2 (pfdA2) (Methanocaldococcus jannaschii (strain ATCC 43067 / DSM 2661 / JAL-1 / JCM 10045 / NBRC 100440) (Methanococcus jannaschii)).